Here is a 165-residue protein sequence, read N- to C-terminus: MRKSASAVAVLALIACGSAHAAGFVGNKAVVQAAVTIAAQNTTSANWSQDPGFTGPAVAAGQKVGTLSITATGPHNSVSIAGKGASVSGGVATVPFVDGQGQPVFRGRIQGANINDQANTGIDGLAGWRVASSQETLNVPVTTFGKSTLPAGTFTATFYVQQYQN.

A signal peptide spans M1–A21.

Its subcellular location is the fimbrium. Functionally, structural subunit of the sef14 fimbriae. The polypeptide is Fimbrial protein (sefA) (Salmonella enteritidis).